A 217-amino-acid chain; its full sequence is GrpE protein homolog 1, mitochondrial (217 aa).

A mitochondrion-targeting transit peptide spans Met1 to Leu27. Lys94 carries the post-translational modification N6-acetyllysine; alternate. The residue at position 94 (Lys94) is an N6-succinyllysine; alternate. Position 100 is an N6-acetyllysine (Lys100). An N6-succinyllysine modification is found at Lys120. An N6-acetyllysine; alternate modification is found at Lys215. Lys215 carries the post-translational modification N6-succinyllysine; alternate.

It belongs to the GrpE family. As to quaternary structure, probable component of the PAM complex at least composed of a mitochondrial HSP70 protein, GRPEL1 or GRPEL2, TIMM44, TIMM16/PAM16 and TIMM14/DNAJC19. Binds to HSP70, HSC70 and HSJ1B.

Its subcellular location is the mitochondrion matrix. Functionally, essential component of the PAM complex, a complex required for the translocation of transit peptide-containing proteins from the inner membrane into the mitochondrial matrix in an ATP-dependent manner. Seems to control the nucleotide-dependent binding of mitochondrial HSP70 to substrate proteins. This chain is GrpE protein homolog 1, mitochondrial (GRPEL1), found in Bos taurus (Bovine).